Consider the following 349-residue polypeptide: 4-hydroxy-3-methylbut-2-enyl diphosphate reductase (349 aa).

A [4Fe-4S] cluster-binding site is contributed by Cys18. Positions 47 and 83 each coordinate (2E)-4-hydroxy-3-methylbut-2-enyl diphosphate. Positions 47 and 83 each coordinate dimethylallyl diphosphate. Isopentenyl diphosphate is bound by residues His47 and His83. Cys105 contacts [4Fe-4S] cluster. His133 provides a ligand contact to (2E)-4-hydroxy-3-methylbut-2-enyl diphosphate. His133 contacts dimethylallyl diphosphate. His133 is an isopentenyl diphosphate binding site. Catalysis depends on Glu135, which acts as the Proton donor. Residue Thr174 coordinates (2E)-4-hydroxy-3-methylbut-2-enyl diphosphate. Cys204 contributes to the [4Fe-4S] cluster binding site. (2E)-4-hydroxy-3-methylbut-2-enyl diphosphate-binding residues include Ser232, Ser233, Asn234, and Ser277. Dimethylallyl diphosphate contacts are provided by Ser232, Ser233, Asn234, and Ser277. Isopentenyl diphosphate contacts are provided by Ser232, Ser233, Asn234, and Ser277.

Belongs to the IspH family. [4Fe-4S] cluster is required as a cofactor.

The enzyme catalyses isopentenyl diphosphate + 2 oxidized [2Fe-2S]-[ferredoxin] + H2O = (2E)-4-hydroxy-3-methylbut-2-enyl diphosphate + 2 reduced [2Fe-2S]-[ferredoxin] + 2 H(+). It catalyses the reaction dimethylallyl diphosphate + 2 oxidized [2Fe-2S]-[ferredoxin] + H2O = (2E)-4-hydroxy-3-methylbut-2-enyl diphosphate + 2 reduced [2Fe-2S]-[ferredoxin] + 2 H(+). It participates in isoprenoid biosynthesis; dimethylallyl diphosphate biosynthesis; dimethylallyl diphosphate from (2E)-4-hydroxy-3-methylbutenyl diphosphate: step 1/1. It functions in the pathway isoprenoid biosynthesis; isopentenyl diphosphate biosynthesis via DXP pathway; isopentenyl diphosphate from 1-deoxy-D-xylulose 5-phosphate: step 6/6. Functionally, catalyzes the conversion of 1-hydroxy-2-methyl-2-(E)-butenyl 4-diphosphate (HMBPP) into a mixture of isopentenyl diphosphate (IPP) and dimethylallyl diphosphate (DMAPP). Acts in the terminal step of the DOXP/MEP pathway for isoprenoid precursor biosynthesis. The chain is 4-hydroxy-3-methylbut-2-enyl diphosphate reductase from Bartonella bacilliformis (strain ATCC 35685 / KC583 / Herrer 020/F12,63).